The chain runs to 309 residues: tRNA dimethylallyltransferase (309 aa).

ATP is bound at residue 10–17 (GPTAVGKT). Residue 12–17 (TAVGKT) coordinates substrate. Residues 35–38 (DSMQ) form an interaction with substrate tRNA region.

It belongs to the IPP transferase family. In terms of assembly, monomer. The cofactor is Mg(2+).

The enzyme catalyses adenosine(37) in tRNA + dimethylallyl diphosphate = N(6)-dimethylallyladenosine(37) in tRNA + diphosphate. Functionally, catalyzes the transfer of a dimethylallyl group onto the adenine at position 37 in tRNAs that read codons beginning with uridine, leading to the formation of N6-(dimethylallyl)adenosine (i(6)A). This chain is tRNA dimethylallyltransferase, found in Clostridium botulinum (strain Eklund 17B / Type B).